A 425-amino-acid chain; its full sequence is Enolase (425 aa).

Position 162 (Gln-162) interacts with (2R)-2-phosphoglycerate. Glu-204 functions as the Proton donor in the catalytic mechanism. Asp-241, Glu-284, and Asp-311 together coordinate Mg(2+). 4 residues coordinate (2R)-2-phosphoglycerate: Lys-336, Arg-365, Ser-366, and Lys-387. The active-site Proton acceptor is Lys-336.

The protein belongs to the enolase family. It depends on Mg(2+) as a cofactor.

The protein localises to the cytoplasm. The protein resides in the secreted. Its subcellular location is the cell surface. It catalyses the reaction (2R)-2-phosphoglycerate = phosphoenolpyruvate + H2O. It participates in carbohydrate degradation; glycolysis; pyruvate from D-glyceraldehyde 3-phosphate: step 4/5. Catalyzes the reversible conversion of 2-phosphoglycerate (2-PG) into phosphoenolpyruvate (PEP). It is essential for the degradation of carbohydrates via glycolysis. The chain is Enolase from Brucella melitensis biotype 2 (strain ATCC 23457).